The sequence spans 873 residues: Tyrosine-protein kinase receptor TYRO3 (873 aa).

A signal peptide spans Met1 to Ala28. 2 consecutive Ig-like C2-type domains span residues Ala29–Ser116 and Pro127–Gln208. The Extracellular portion of the chain corresponds to Ala29–Trp416. N-linked (GlcNAc...) asparagine glycosylation occurs at Asn51. Intrachain disulfides connect Cys52–Cys105 and Cys148–Cys191. Asn179, Asn184, Asn218, Asn228, Asn281, Asn353, and Asn367 each carry an N-linked (GlcNAc...) asparagine glycan. Fibronectin type-III domains are found at residues Pro215–Leu308 and Pro310–Val403. Residues Val417–Leu437 traverse the membrane as a helical segment. The Cytoplasmic portion of the chain corresponds to Leu438–Cys873. One can recognise a Protein kinase domain in the interval Phe505–Ile776. Residues Leu511–Val519 and Lys537 contribute to the ATP site. The Proton acceptor role is filled by Asp642. Position 673 is a phosphotyrosine; by autocatalysis (Tyr673). The tract at residues Val845–Cys873 is disordered. Positions Gly847–Asn858 are enriched in basic and acidic residues.

The protein belongs to the protein kinase superfamily. Tyr protein kinase family. AXL/UFO subfamily. Autophosphorylated on tyrosine residues. In terms of tissue distribution, detected in embryonic retina (at protein level). detected in brain, retina, kidney and in retinal Mueller glia-like cells.

It is found in the cell membrane. It catalyses the reaction L-tyrosyl-[protein] + ATP = O-phospho-L-tyrosyl-[protein] + ADP + H(+). In terms of biological role, receptor tyrosine kinase that transduces signals from the extracellular matrix into the cytoplasm by binding to several ligands. Regulates many physiological processes including cell survival, migration and differentiation. Ligand binding at the cell surface induces dimerization and autophosphorylation of TYRO3 on its intracellular domain that provides docking sites for downstream signaling molecules. Following activation by ligand, enhances PI3-kinase activity and activates the AKT survival pathway, including nuclear translocation of NF-kappa-B and up-regulation of transcription of NF-kappa-B-regulated genes. This Gallus gallus (Chicken) protein is Tyrosine-protein kinase receptor TYRO3 (TYRO3).